The sequence spans 130 residues: Small ribosomal subunit protein uS11c (130 aa).

It belongs to the universal ribosomal protein uS11 family. As to quaternary structure, part of the 30S ribosomal subunit.

Its subcellular location is the plastid. The protein localises to the chloroplast. This Cycas taitungensis (Prince sago) protein is Small ribosomal subunit protein uS11c.